A 331-amino-acid polypeptide reads, in one-letter code: Glutamyl-Q tRNA(Asp) synthetase (331 aa).

Over residues 1–30 (MVQQAVIQRSANQQLSNQRSANQRATNQPT) the composition is skewed to polar residues. The segment at 1-36 (MVQQAVIQRSANQQLSNQRSANQRATNQPTEYVGRF) is disordered. L-glutamate-binding positions include 35–39 (RFAPS) and Glu-71. The short motif at 38–48 (PSPSGDLHFGS) is the 'HIGH' region element. Residues Cys-127, Cys-129, Tyr-141, and Cys-145 each contribute to the Zn(2+) site. L-glutamate is bound by residues Tyr-198 and Arg-216. The 'KMSKS' region motif lies at 254–258 (KLSKQ). Lys-257 serves as a coordination point for ATP.

It belongs to the class-I aminoacyl-tRNA synthetase family. GluQ subfamily. Zn(2+) is required as a cofactor.

Catalyzes the tRNA-independent activation of glutamate in presence of ATP and the subsequent transfer of glutamate onto a tRNA(Asp). Glutamate is transferred on the 2-amino-5-(4,5-dihydroxy-2-cyclopenten-1-yl) moiety of the queuosine in the wobble position of the QUC anticodon. The polypeptide is Glutamyl-Q tRNA(Asp) synthetase (Yersinia pseudotuberculosis serotype I (strain IP32953)).